Consider the following 865-residue polypeptide: MQTTHPKNLHLTCSGVERGFTNSPKTHPKMSSLKSFIKAVRASKTTAEEHTTILKESAQIRKNIRQGSNDMRMRRKNVAKLLYLFLLGEPTHFGQIECLKLLSSSRFMDKRLGYLAAMLLLDENQEVLTLLTNSLQNDLKSRDKFIVGLALSAFGNVAGPELARDLSNDIAELCSNHHNYISKKAVLCALRVIQKEPDLESLYIEKTDELLHSKSHGVLMAALAFAISACKINPSLISRFESQADDLIYRIRQLSTSTYSSEHNIGNISDPFLQVKILQFLSILGQNNPKIYDKMSDLLAQVCTNTDSSRNAGNAILYQAVRTILDLNSDSSLRVLGVNILAKFLGNRDNNTRYVALNMLKLVVNSEENAVQRHRSTILACLNDVDSSIQSRALELSTFLVNEANVRFMVRELLSFLDNVSDELRGSTAQYITEVTNAFAPNKRWHFDTLLRVFKSAGNFVSESTLSTFLRLIASAPELHEYAVVKLYAALKEDVSQEALTLSAFWVIGEYGQMLLSPTMNFDDDQTLPHSVSESDIVDIIEEVFNSVEASRYIIVQYGLFALTKLSARLGSSSTASRIDKIIYSYKRNKNTEVQQRSVEFHLILNDSKLSKTILEPTPAPLPPPRTTPYQNAEQKLKANKHVEKRVQESNELLDLIGLTTPSVAEPLETPVDEMTQSPQSSLSRAPSTSKKSHFEDILGLFASPAPSAQPVDSLASSFASLDFNASASQPSNNLSLLSSIPSTSKSYPPIVVFDKHDVTLTLVPSKEESTKTAVIEAKFKNKNPMTRVEKIHLEVAVPKSQKLKIQPLRTTSMEPGGETSQTLRVHGPSGSQVKLRLRISVVRQGGSNTLDQVDFGKLPSDLLQ.

Residues 665–690 are disordered; it reads AEPLETPVDEMTQSPQSSLSRAPSTS. Over residues 675-690 the composition is skewed to polar residues; that stretch reads MTQSPQSSLSRAPSTS. The GAE domain occupies 746-860; it reads KSYPPIVVFD…LDQVDFGKLP (115 aa).

Belongs to the adaptor complexes large subunit family. In terms of assembly, adaptor protein complex 1 (AP-1) is a heterotetramer composed of two large adaptins (gamma-type subunit apl4 and beta-type subunit apl2), a medium adaptin (mu-type subunit apm1) and a small adaptin (sigma-type subunit aps1). AP-1 interacts with clathrin.

It is found in the cytoplasmic vesicle. The protein localises to the clathrin-coated vesicle membrane. Its subcellular location is the golgi apparatus. Its function is as follows. Adaptins are components of the adaptor complexes which link clathrin to receptors in coated vesicles. Clathrin-associated protein complexes are believed to interact with the cytoplasmic tails of membrane proteins, leading to their selection and concentration. The AP-1 complex interacts directly with clathrin. This is AP-1 complex subunit gamma-1 (apl4) from Schizosaccharomyces pombe (strain 972 / ATCC 24843) (Fission yeast).